The primary structure comprises 508 residues: Protein disulfide-isomerase (508 aa).

The first 17 residues, 1–17 (MLRRALLCLAVAALVRA), serve as a signal peptide directing secretion. Positions 18 to 134 (DAPEEEDHVL…IVNWLKKRTG (117 aa)) constitute a Thioredoxin 1 domain. Catalysis depends on nucleophile residues Cys53 and Cys56. Cys53 and Cys56 are disulfide-bonded. N6-acetyllysine is present on Lys200. Lys222 and Lys271 each carry N6-succinyllysine. Ser331 is subject to Phosphoserine. A Thioredoxin 2 domain is found at 349 to 475 (GKIKPHLMSQ…FKKFLESGGQ (127 aa)). Ser357 is modified (phosphoserine; by FAM20C). Active-site nucleophile residues include Cys397 and Cys400. Cys397 and Cys400 are joined by a disulfide. Residue Ser427 is modified to Phosphoserine. The disordered stretch occupies residues 471 to 508 (ESGGQDGAGDDDDLEDLEEAEEPDMEEDDDQKAVKDEL). Acidic residues predominate over residues 478-500 (AGDDDDLEDLEEAEEPDMEEDDD). The Prevents secretion from ER motif lies at 505 to 508 (KDEL).

It belongs to the protein disulfide isomerase family. In terms of assembly, heterodimer; heterodimerizes with the protein microsomal triglyceride transfer MTTP. Homodimer. Monomers and homotetramers may also occur. Interacts with P4HA2, forming a heterotetramer consisting of 2 alpha subunits (P4HA2) and 2 beta (P4HB), where P4HB plays the role of a structural subunit; this tetramer catalyzes the formation of 4-hydroxyproline in collagen. Also constitutes the structural subunit of the microsomal triacylglycerol transfer protein MTTP in mammalian cells. Stabilizes both enzymes and retain them in the ER without contributing to the catalytic activity. Binds UBQLN1. Interacts with ERO1B. Binds to CD4, and upon HIV-1 binding to the cell membrane, is part of a P4HB/PDI-CD4-CXCR4-gp120 complex. Interacts with ILDR2. Interacts with ERN1/IRE1A (via N-terminus); the interaction is enhanced by phosphorylation of P4HB by FAM20C in response to endoplasmic reticulum stress and results in attenuation of ERN1 activity. In terms of processing, phosphorylation of Ser-357 by FAM20C is induced by endoplasmic reticulum stress and results in a functional switch from oxidoreductase to molecular chaperone. It also promotes interaction with ERN1.

It localises to the endoplasmic reticulum. The protein resides in the endoplasmic reticulum lumen. The protein localises to the melanosome. It is found in the cell membrane. The catalysed reaction is Catalyzes the rearrangement of -S-S- bonds in proteins.. This multifunctional protein catalyzes the formation, breakage and rearrangement of disulfide bonds. At the cell surface, seems to act as a reductase that cleaves disulfide bonds of proteins attached to the cell. May therefore cause structural modifications of exofacial proteins. Inside the cell, seems to form/rearrange disulfide bonds of nascent proteins. At high concentrations and following phosphorylation by FAM20C, functions as a chaperone that inhibits aggregation of misfolded proteins. At low concentrations, facilitates aggregation (anti-chaperone activity). May be involved with other chaperones in the structural modification of the TG precursor in hormone biogenesis. Also acts as a structural subunit of various enzymes such as prolyl 4-hydroxylase and microsomal triacylglycerol transfer protein MTTP. Receptor for LGALS9; the interaction retains P4HB at the cell surface of Th2 T helper cells, increasing disulfide reductase activity at the plasma membrane, altering the plasma membrane redox state and enhancing cell migration. The sequence is that of Protein disulfide-isomerase (P4HB) from Homo sapiens (Human).